Consider the following 412-residue polypeptide: Imidazolonepropionase (412 aa).

The Fe(3+) site is built by histidine 76 and histidine 78. Zn(2+)-binding residues include histidine 76 and histidine 78. Positions 85, 148, and 181 each coordinate 4-imidazolone-5-propanoate. Tyrosine 148 contributes to the N-formimidoyl-L-glutamate binding site. Histidine 242 is a Fe(3+) binding site. Histidine 242 is a binding site for Zn(2+). Glutamate 245 serves as a coordination point for 4-imidazolone-5-propanoate. A Fe(3+)-binding site is contributed by aspartate 317. Aspartate 317 provides a ligand contact to Zn(2+). Asparagine 319 and glycine 321 together coordinate N-formimidoyl-L-glutamate. 4-imidazolone-5-propanoate is bound at residue serine 322.

This sequence belongs to the metallo-dependent hydrolases superfamily. HutI family. Requires Zn(2+) as cofactor. The cofactor is Fe(3+).

The protein resides in the cytoplasm. It carries out the reaction 4-imidazolone-5-propanoate + H2O = N-formimidoyl-L-glutamate. The protein operates within amino-acid degradation; L-histidine degradation into L-glutamate; N-formimidoyl-L-glutamate from L-histidine: step 3/3. Its function is as follows. Catalyzes the hydrolytic cleavage of the carbon-nitrogen bond in imidazolone-5-propanoate to yield N-formimidoyl-L-glutamate. It is the third step in the universal histidine degradation pathway. In Staphylococcus aureus (strain USA300 / TCH1516), this protein is Imidazolonepropionase.